The chain runs to 563 residues: MLPPALLRRSLLSYAWRGSGLRWKHASSLKVANEPILAFTQGSPERDALQKALNDLKDQTEAIPCVVGDEEVWTSDVRYQLSPFNHGHKVAKFCYADKALLNKAIEAAVLARKEWDLKPVADRAQIFLKAADMLSGPRRAEILAKTMVGQGKTVIQAEIDAAAELIDFFRFNAKFAVELEGEQPISVPPSTNHVVYRGLEGFVAAISPFNFTAIGGNLAGAPALMGNVVLWKPSDTAMLASYAVYRILREAGLPPNVIQFVPADGPTFGDTVTSSEHLCGINFTGSVPTFKHLWKQVAQNLDRFRTFPRLAGECGGKNFHFVHSSADVDSVVSGTLRSAFEYGGQKCSACSRLYVPQSLWPQIKGRLLEEHSRIKVGNPAEDFGTFFSAVIDAKAFARIKKWLEHARSSPSLSILAGGQCNESVGYFVEPCIIESKDPQEPIMKEEIFGPVLTVYVYPDEKYRETLQLVDSTTSYGLTGAVFAQDKTIVQEATRMLRNAAGNFYINDKSTGSVVGQQPFGGARASGERDIPGQPRLVQLWTEPPFTPLAVSPPLGDWRYSYMQ.

The transit peptide at 1–23 directs the protein to the mitochondrion; sequence MLPPALLRRSLLSYAWRGSGLRW. Lys-30 bears the N6-succinyllysine mark. Ser-43 carries the phosphoserine modification. Lys-51 carries the post-translational modification N6-acetyllysine. 5 positions are modified to N6-acetyllysine; alternate: Lys-92, Lys-98, Lys-113, Lys-129, and Lys-174. 5 positions are modified to N6-succinyllysine; alternate: Lys-92, Lys-98, Lys-113, Lys-129, and Lys-174. NAD(+) contacts are provided by residues Ser-207, Lys-232, and 285–289; that span reads GSVPT. The active-site Proton acceptor is the Glu-313. Lys-317 is subject to N6-acetyllysine. Position 346 is an N6-succinyllysine (Lys-346). Catalysis depends on Cys-347, which acts as the Nucleophile. N6-acetyllysine occurs at positions 364 and 375. N6-succinyllysine is present on Lys-394. Glu-446 serves as a coordination point for NAD(+). Lys-461 carries the post-translational modification N6-acetyllysine. Lys-508 carries the N6-acetyllysine; alternate modification. N6-succinyllysine; alternate is present on Lys-508. Ser-512 is a binding site for substrate.

Belongs to the aldehyde dehydrogenase family. Homodimer.

The protein resides in the mitochondrion matrix. The catalysed reaction is L-glutamate 5-semialdehyde + NAD(+) + H2O = L-glutamate + NADH + 2 H(+). It participates in amino-acid degradation; L-proline degradation into L-glutamate; L-glutamate from L-proline: step 2/2. Its function is as follows. Irreversible conversion of delta-1-pyrroline-5-carboxylate (P5C), derived either from proline or ornithine, to glutamate. This is a necessary step in the pathway interconnecting the urea and tricarboxylic acid cycles. The preferred substrate is glutamic gamma-semialdehyde, other substrates include succinic, glutaric and adipic semialdehydes. The protein is Delta-1-pyrroline-5-carboxylate dehydrogenase, mitochondrial (Aldh4a1) of Rattus norvegicus (Rat).